A 180-amino-acid polypeptide reads, in one-letter code: ATP synthase subunit b (180 aa).

The helical transmembrane segment at 26–48 (SMILFWKAVNTVILLGLVYYFGG) threads the bilayer.

This sequence belongs to the ATPase B chain family. In terms of assembly, F-type ATPases have 2 components, F(1) - the catalytic core - and F(0) - the membrane proton channel. F(1) has five subunits: alpha(3), beta(3), gamma(1), delta(1), epsilon(1). F(0) has three main subunits: a(1), b(2) and c(10-14). The alpha and beta chains form an alternating ring which encloses part of the gamma chain. F(1) is attached to F(0) by a central stalk formed by the gamma and epsilon chains, while a peripheral stalk is formed by the delta and b chains.

It localises to the cell inner membrane. Functionally, f(1)F(0) ATP synthase produces ATP from ADP in the presence of a proton or sodium gradient. F-type ATPases consist of two structural domains, F(1) containing the extramembraneous catalytic core and F(0) containing the membrane proton channel, linked together by a central stalk and a peripheral stalk. During catalysis, ATP synthesis in the catalytic domain of F(1) is coupled via a rotary mechanism of the central stalk subunits to proton translocation. Its function is as follows. Component of the F(0) channel, it forms part of the peripheral stalk, linking F(1) to F(0). The sequence is that of ATP synthase subunit b from Sulfurihydrogenibium sp. (strain YO3AOP1).